The following is a 156-amino-acid chain: Small ribosomal subunit protein uS7c (156 aa).

Belongs to the universal ribosomal protein uS7 family. In terms of assembly, part of the 30S ribosomal subunit.

It localises to the plastid. The protein resides in the chloroplast. Functionally, one of the primary rRNA binding proteins, it binds directly to 16S rRNA where it nucleates assembly of the head domain of the 30S subunit. This Nephroselmis olivacea (Green alga) protein is Small ribosomal subunit protein uS7c (rps7).